We begin with the raw amino-acid sequence, 140 residues long: Baculoviral IAP repeat-containing protein 5 (140 aa).

Residues 18 to 88 (RIATFKNWPF…KHSPGCAFLT (71 aa)) form a BIR repeat. K23 bears the N6-acetyllysine mark. T34 is subject to Phosphothreonine; by CDK1 and CDK15. At T48 the chain carries Phosphothreonine. Zn(2+) contacts are provided by C57, C60, E76, H77, H80, and C84. N6-acetyllysine is present on residues K90, K110, K112, and K115. Over residues 113 to 129 (IAKETNNKQKEFEETAK) the composition is skewed to basic and acidic residues. Residues 113–140 (IAKETNNKQKEFEETAKTTRQSIEQLAA) form a disordered region. A Phosphothreonine; by AURKB modification is found at T117. K129 is subject to N6-acetyllysine. Polar residues predominate over residues 130–140 (TTRQSIEQLAA).

This sequence belongs to the IAP family. Monomer or homodimer. Exists as a homodimer in the apo state and as a monomer in the CPC-bound state. The monomer protects cells against apoptosis more efficiently than the dimer. Only the dimeric form is capable of enhancing tubulin stability in cells. When phosphorylated, interacts with LAMTOR5/HBXIP; the resulting complex binds pro-CASP9, as well as active CASP9, but much less efficiently. Component of the chromosomal passenger complex (CPC) composed of at least BIRC5/survivin, CDCA8/borealin, INCENP, AURKB or AURKC; in the complex forms a triple-helix bundle-based subcomplex with INCENP and CDCA8. Interacts with JTB. Interacts (via BIR domain) with histone H3 phosphorylated at 'Thr-3' (H3pT3). Interacts with EVI5. Interacts with GTP-bound RAN in both the S and M phases of the cell cycle. Interacts with USP9X. Interacts with tubulin. Interacts with BIRC2/c-IAP1. The acetylated form at Lys-129 interacts with STAT3. The monomeric form deacetylated at Lys-129 interacts with XPO1/CRM1. The monomeric form interacts with XIAP/BIRC4. Both the dimeric and monomeric form can interact with DIABLO/SMAC. Interacts with BIRC6/bruce. Interacts with FBXL7; this interaction facilitates the polyubiquitination and subsequent proteasomal degradation of BIRC5 by the SCF(FBXL7) E3 ubiquitin-protein ligase complex. Ubiquitinated by the Cul9-RING ubiquitin-protein ligase complex, leading to its degradation. Ubiquitination is required for centrosomal targeting. Deubiquitinated by USP35 or USP38; leading to stabilization. Post-translationally, acetylation at Lys-129 results in its homodimerization, while deacetylation promotes the formation of monomers which heterodimerize with XPO1/CRM1 which facilitates its nuclear export. The acetylated form represses STAT3 transactivation. The dynamic equilibrium between its acetylation and deacetylation at Lys-129 determines its interaction with XPO1/CRM1, its subsequent subcellular localization, and its ability to inhibit STAT3 transactivation. In terms of processing, in vitro phosphorylation at Thr-117 by AURKB prevents interaction with INCENP and localization to mitotic chromosomes. Phosphorylation at Thr-48 by CK2 is critical for its mitotic and anti-apoptotic activities. Phosphorylation at Thr-34 by CDK15 is critical for its anti-apoptotic activity.

The protein resides in the cytoplasm. The protein localises to the nucleus. It is found in the chromosome. Its subcellular location is the centromere. It localises to the cytoskeleton. The protein resides in the spindle. The protein localises to the kinetochore. It is found in the midbody. Functionally, multitasking protein that has dual roles in promoting cell proliferation and preventing apoptosis. Component of a chromosome passage protein complex (CPC) which is essential for chromosome alignment and segregation during mitosis and cytokinesis. Acts as an important regulator of the localization of this complex; directs CPC movement to different locations from the inner centromere during prometaphase to midbody during cytokinesis and participates in the organization of the center spindle by associating with polymerized microtubules. Involved in the recruitment of CPC to centromeres during early mitosis via association with histone H3 phosphorylated at 'Thr-3' (H3pT3) during mitosis. The complex with RAN plays a role in mitotic spindle formation by serving as a physical scaffold to help deliver the RAN effector molecule TPX2 to microtubules. May counteract a default induction of apoptosis in G2/M phase. The acetylated form represses STAT3 transactivation of target gene promoters. May play a role in neoplasia. Inhibitor of CASP3 and CASP7. Essential for the maintenance of mitochondrial integrity and function. In Mus musculus (Mouse), this protein is Baculoviral IAP repeat-containing protein 5 (Birc5).